A 426-amino-acid chain; its full sequence is D-tagatose-1,6-bisphosphate aldolase subunit KbaZ (426 aa).

Belongs to the GatZ/KbaZ family. KbaZ subfamily. As to quaternary structure, forms a complex with KbaY.

Its pathway is carbohydrate metabolism; D-tagatose 6-phosphate degradation; D-glyceraldehyde 3-phosphate and glycerone phosphate from D-tagatose 6-phosphate: step 2/2. In terms of biological role, component of the tagatose-1,6-bisphosphate aldolase KbaYZ that is required for full activity and stability of the Y subunit. Could have a chaperone-like function for the proper and stable folding of KbaY. When expressed alone, KbaZ does not show any aldolase activity. This chain is D-tagatose-1,6-bisphosphate aldolase subunit KbaZ, found in Escherichia coli (strain ATCC 8739 / DSM 1576 / NBRC 3972 / NCIMB 8545 / WDCM 00012 / Crooks).